A 457-amino-acid polypeptide reads, in one-letter code: Putative HD domain-containing protein L394 (457 aa).

An HD domain is found at 65–206; the sequence is RLEHSIGVYD…GIDVDKFDYL (142 aa).

The chain is Putative HD domain-containing protein L394 from Acanthamoeba polyphaga mimivirus (APMV).